A 420-amino-acid polypeptide reads, in one-letter code: Gamma-glutamyl phosphate reductase (420 aa).

The protein belongs to the gamma-glutamyl phosphate reductase family.

It localises to the cytoplasm. The catalysed reaction is L-glutamate 5-semialdehyde + phosphate + NADP(+) = L-glutamyl 5-phosphate + NADPH + H(+). The protein operates within amino-acid biosynthesis; L-proline biosynthesis; L-glutamate 5-semialdehyde from L-glutamate: step 2/2. Catalyzes the NADPH-dependent reduction of L-glutamate 5-phosphate into L-glutamate 5-semialdehyde and phosphate. The product spontaneously undergoes cyclization to form 1-pyrroline-5-carboxylate. In Neisseria gonorrhoeae (strain ATCC 700825 / FA 1090), this protein is Gamma-glutamyl phosphate reductase.